The chain runs to 1050 residues: MVFSMWTRKRQILIFLNMLLVSRVFGFRWFPKTLPCEVKVNIPEAHVIVDCTDKHLTEIPEGIPTNTTNLTLTINHIPSISPDSFRRLNHLEEIDLRCNCVPVLLGSKANVCTKRLQIRPGSFSGLSDLKALYLDGNQLLEIPQDLPSSLHLLSLEANNIFSITKENLTELVNIETLYLGQNCYYRNPCNVSYSIEKDAFLVMRNLKVLSLKDNNVTAVPTTLPPNLLELYLYNNIIKKIQENDFNNLNELQVLDLSGNCPRCYNVPYPCTPCENNSPLQIHDNAFNSLTELKVLRLHSNSLQHVPPTWFKNMRNLQELDLSQNYLAREIEEAKFLHFLPNLVELDFSFNYELQVYHASITLPHSLSSLENLKILRVKGYVFKELKNSSLSVLHKLPRLEVLDLGTNFIKIADLNIFKHFENLKLIDLSVNKISPSEESREVGFCPNAQTSVDRHGPQVLEALHYFRYDEYARSCRFKNKEPPSFLPLNADCHIYGQTLDLSRNNIFFIKPSDFQHLSFLKCLNLSGNTIGQTLNGSELWPLRELRYLDFSNNRLDLLYSTAFEELQSLEVLDLSSNSHYFQAEGITHMLNFTKKLRLLDKLMMNDNDISTSASRTMESDSLRILEFRGNHLDVLWRAGDNRYLDFFKNLFNLEVLDISRNSLNSLPPEVFEGMPPNLKNLSLAKNGLKSFFWDRLQLLKHLEILDLSHNQLTKVPERLANCSKSLTTLILKHNQIRQLTKYFLEDALQLRYLDISSNKIQVIQKTSFPENVLNNLEMLVLHHNRFLCNCDAVWFVWWVNHTDVTIPYLATDVTCVGPGAHKGQSVISLDLYTCELDLTNLILFSVSISSVLFLMVVMTTSHLFFWDMWYIYYFWKAKIKGYQHLQSMESCYDAFIVYDTKNSAVTEWVLQELVAKLEDPREKHFNLCLEERDWLPGQPVLENLSQSIQLSKKTVFVMTQKYAKTESFKMAFYLSHQRLLDEKVDVIILIFLEKPLQKSKFLQLRKRLCRSSVLEWPANPQAHPYFWQCLKNALTTDNHVAYSQMFKETV.

The N-terminal stretch at 1-26 (MVFSMWTRKRQILIFLNMLLVSRVFG) is a signal peptide. Topologically, residues 27 to 837 (FRWFPKTLPC…SLDLYTCELD (811 aa)) are extracellular. LRR repeat units follow at residues 42–64 (IPEA…EGIP), 65–87 (TNTT…SFRR), 89–111 (NHLE…KANV), 126–149 (LSDL…LPSS), 151–170 (HLLS…NLTE), 171–195 (LVNI…SYSI), 203–226 (MRNL…LPPN), 228–247 (LELY…DFNN), 248–273 (LNEL…CTPC), 275–289 (NNSP…FNSL), 290–312 (TELK…WFKN), 314–337 (RNLQ…KFLH), 339–364 (LPNL…TLPH), 369–392 (LENL…SLSV), 396–419 (LPRL…IFKH), 421–443 (ENLK…REVG), 493–516 (HIYG…DFQH), 517–542 (LSFL…LWPL), 543–565 (RELR…AFEE), and 567–589 (QSLE…ITHM). Residues Asn-66 and Asn-69 are each glycosylated (N-linked (GlcNAc...) asparagine). N-linked (GlcNAc...) asparagine glycosylation is found at Asn-167, Asn-190, and Asn-215. Asn-387 is a glycosylation site (N-linked (GlcNAc...) asparagine). Residues Asn-524 and Asn-535 are each glycosylated (N-linked (GlcNAc...) asparagine). Asn-591 is a glycosylation site (N-linked (GlcNAc...) asparagine). LRR repeat units lie at residues 596–619 (LRLL…TMES), 620–645 (DSLR…RYLD), 650–673 (LFNL…VFEG), 675–698 (PPNL…RLQL), 699–722 (LKHL…LANC), 724–746 (KSLT…FLED), 747–770 (ALQL…SFPE), and 773–796 (LNNL…VWFV). Asn-680 and Asn-721 each carry an N-linked (GlcNAc...) asparagine glycan. Asn-800 is a glycosylation site (N-linked (GlcNAc...) asparagine). A helical transmembrane segment spans residues 838–858 (LTNLILFSVSISSVLFLMVVM). Residues 859 to 1050 (TTSHLFFWDM…AYSQMFKETV (192 aa)) are Cytoplasmic-facing. Residues 890 to 1034 (SCYDAFIVYD…YFWQCLKNAL (145 aa)) form the TIR domain.

Belongs to the Toll-like receptor family. In terms of assembly, homodimer. Interacts with MYD88 via their respective TIR domains. Interacts with UNC93B1. Interacts with SMPDL3B. Post-translationally, the first cleavage is performed by asparagine endopeptidase or cathepsin family members. This initial cleavage event is followed by a trimming event that is solely cathepsin mediated and required for optimal receptor signaling.

It localises to the endosome membrane. The protein localises to the endoplasmic reticulum membrane. The protein resides in the lysosome. Its subcellular location is the cytoplasmic vesicle. It is found in the phagosome. Activated by guanosine analogs including deoxyguanosine, 7-thia-8-oxoguanosine or 7-deazaguanosine in a RNA-independent manner. Its function is as follows. Endosomal receptor that plays a key role in innate and adaptive immunity. Controls host immune response against pathogens through recognition of uridine-containing single strand RNAs (ssRNAs) of viral origin or guanosine analogs. Upon binding to agonists, undergoes dimerization that brings TIR domains from the two molecules into direct contact, leading to the recruitment of TIR-containing downstream adapter MYD88 through homotypic interaction. In turn, the Myddosome signaling complex is formed involving IRAK4, IRAK1, TRAF6, TRAF3 leading to activation of downstream transcription factors NF-kappa-B and IRF7 to induce pro-inflammatory cytokines and interferons, respectively. In plasmacytoid dendritic cells, RNASET2 endonuclease cooperates with PLD3 or PLD4 5'-&gt;3' exonucleases to process RNA and release 2',3'-cyclic guanosine monophosphate (2',3'-cGMP) and cytidine-rich RNA fragments that occupy TLR7 ligand-binding pockets and trigger a signaling-competent state. The sequence is that of Toll-like receptor 7 (Tlr7) from Mus musculus (Mouse).